Consider the following 447-residue polypeptide: F-box only protein 5 (447 aa).

S94 and S102 each carry phosphoserine. The interval 135 to 244 (ALETSRLYED…IGRKMGLECV (110 aa)) is interaction with EVI5. Residues 250–296 (LFRRGLRHVLATILAQLSDMDLINVSKVSTTWKKILEDDKGAFQLYS) enclose the F-box domain. A sufficient for interaction with RPS6KA2; Prevents association of CDC20 with RPS6KA2 region spans residues 261-339 (TILAQLSDMD…KSAAQTSLKK (79 aa)). Residues 261-409 (TILAQLSDMD…GCGFDYCTKC (149 aa)) are requires for efficient binding to CDC20. The inhibits APC ubiquitin ligase activity stretch occupies residues 305–447 (NNNKFSPHAS…KKSKKNLRRL (143 aa)). A competitively blocks access of APC substrates to the D-box coreceptor formed by FZR1 and ANAPC10 region spans residues 322–325 (RTPL). The tract at residues 337–358 (LKKDAQTKLSNQGDQKGSTYSR) is disordered. Residues 343-357 (TKLSNQGDQKGSTYS) are compositionally biased toward polar residues. The segment at 374–422 (SLKACIRCNSPAKYDCYLQRATCKREGCGFDYCTKCLCNYHTTKDCSDG) adopts a ZBR-type zinc-finger fold. Zn(2+)-binding residues include C378, C381, C396, C401, C406, C409, H414, and C419. The tract at residues 378–420 (CIRCNSPAKYDCYLQRATCKREGCGFDYCTKCLCNYHTTKDCS) is allows a rapid multiple mono-ubiquitination of the APC substrate, but strongly inhibits the slow ubiquitin chain elongation catalyzed by UBCH10. Positions 437-447 (TKKSKKNLRRL) are sufficient to suppress UBE2S activity; essential for interaction with UBE2S; competitively inhibits the rapide ubiquitin chain elongation by UBE2D1 which blocks UBE2D1 with APC; indispensable for recruitment and position of FBXO5 to the catalytic site of APC; abrogates the inhibition of ubiquitin chain assembly primarily catalyzed by UBE2S; inhibits the ubiquitination by either UBE2C or UBE2D1.

Part of a SCF (SKP1-cullin-F-box) protein ligase complex. Interacts with BTRC; mediates proteolysis by the SCF ubiquitin ligase complex leading to activation of APC in late mitosis and subsequent mitotic progression. Interacts with FZR1/CDH1 and the N-terminal substrate-binding domain of CDC20; prevents APC activation. Also interacts with EVI5 which blocks its phosphorylation by PLK1 and prevents its subsequent binding to BTRC and degradation. Interacts simultaneously with anaphase promoting complex (APC), through at least ANAPC2, CDC23, CDC27, the APC substrate GMNN and the APC activator FZR1. Interacts with UBE2S; interferes with the activity of UBE2S mainly by disrupting the dynamic electrostatic association between the C-terminal tail of UBE2S and ANAPC2. Interacts with RPS6KA2; cooperates to induce the metaphase arrest of early blastomeres; increases and stabilizes interaction of FBXO5 with CDC20. Post-translationally, phosphorylation by CDK2 and subsequently by PLK1 triggers degradation during early mitosis through ubiquitin-mediated proteolysis by the SCF ubiquitin ligase complex containing the F-box protein BTRC. This degradation is necessary for the activation of APC in late mitosis and subsequent mitotic progression. Phosphorylated by RPS6KA2; increases and stabilizes interaction with CDC20. Ubiquitinated by the SCF(BTRC) complex following phosphorylation by PLK1. Undergoes both 'Lys-11' and 'Lys-48'-linked polyubiquitination by APC-FZR1 complex leading to degradation by proteasome during G1 phase. Degraded through the SCF(BTRC) complex; degradation occurs during oocyte maturation, between germinal vesicle breakdown (GVBD) and meiosis I, and is required for the meiosis I-meiosis II transition.

The protein localises to the nucleus. It is found in the cytoplasm. Its subcellular location is the cytoskeleton. The protein resides in the spindle. It functions in the pathway protein modification; protein ubiquitination. Regulator of APC activity during mitotic and meiotic cell cycle. During mitotic cell cycle plays a role as both substrate and inhibitor of APC-FZR1 complex. During G1 phase, plays a role as substrate of APC-FZR1 complex E3 ligase. Then switches as an inhibitor of APC-FZR1 complex during S and G2 leading to cell-cycle commitment. As APC inhibitor, prevents the degradation of APC substrates at multiple levels: by interacting with APC and blocking access of APC substrates to the D-box coreceptor, formed by FZR1 and ANAPC10; by suppressing ubiquitin ligation and chain elongation by APC by preventing the UBE2C and UBE2S activities. Plays a role in genome integrity preservation by coordinating DNA replication with mitosis through APC inhibition in interphase to stabilize CCNA2 and GMNN in order to promote mitosis and prevent rereplication and DNA damage-induced cellular senescence. During oocyte maturation, plays a role in meiosis through inactivation of APC-FZR1 complex. Inhibits APC through RPS6KA2 interaction that increases FBXO5 affiniy for CDC20 leading to the metaphase arrest of the second meiotic division before fertilization. Controls entry into the first meiotic division through inactivation of APC-FZR1 complex. Promotes migration and osteogenic differentiation of mesenchymal stem cells. This is F-box only protein 5 from Homo sapiens (Human).